The chain runs to 216 residues: 2-hydroxy-3-keto-5-methylthiopentenyl-1-phosphate phosphatase (216 aa).

Belongs to the HAD-like hydrolase superfamily. MtnX family.

The catalysed reaction is 2-hydroxy-5-methylsulfanyl-3-oxopent-1-enyl phosphate + H2O = 1,2-dihydroxy-5-(methylsulfanyl)pent-1-en-3-one + phosphate. It participates in amino-acid biosynthesis; L-methionine biosynthesis via salvage pathway; L-methionine from S-methyl-5-thio-alpha-D-ribose 1-phosphate: step 4/6. Its function is as follows. Dephosphorylates 2-hydroxy-3-keto-5-methylthiopentenyl-1-phosphate (HK-MTPenyl-1-P) yielding 1,2-dihydroxy-3-keto-5-methylthiopentene (DHK-MTPene). The polypeptide is 2-hydroxy-3-keto-5-methylthiopentenyl-1-phosphate phosphatase (Exiguobacterium sp. (strain ATCC BAA-1283 / AT1b)).